A 645-amino-acid chain; its full sequence is DEAD-box ATP-dependent RNA helicase 46 (645 aa).

Disordered regions lie at residues 1–22 (MAATASAIRYAPEDPNLPKPWK) and 44–137 (YERP…AGNE). One can recognise a WW domain in the interval 15-49 (PNLPKPWKGLVDSRTGYLYFWNPETNVTQYERPAS). The span at 60 to 72 (VSSSVQTNQQSSS) shows a compositional bias: low complexity. The segment covering 77–91 (GKEDDKYGRGSDGPK) has biased composition (basic and acidic residues). Residues 108–136 (SSNDAASGLGNASSGGSSARGPPSSAAGN) show a composition bias toward low complexity. A Q motif motif is present at residues 161 to 189 (MSFEATGLPNELLREVYSAGFSAPSPIQA). Positions 192–366 (WPIAMQNRDI…ADLLVNPAQV (175 aa)) constitute a Helicase ATP-binding domain. 205-212 (AKTGSGKT) provides a ligand contact to ATP. The short motif at 314-317 (DEAD) is the DEAD box element. Positions 395–539 (RLEQILRSQE…KVPPQVREMA (145 aa)) constitute a Helicase C-terminal domain. The segment at 532-645 (PPQVREMATR…FHEAMMMKNR (114 aa)) is disordered. The segment covering 556–597 (SSGGGGGRGGYGDSGYGGRGESGYGSRGDSGYGGRGDSGGRG) has biased composition (gly residues). Residues 598–608 (SWAPSRDSSGS) show a composition bias toward low complexity. The span at 612 to 623 (GRERSRSPERFR) shows a compositional bias: basic and acidic residues. The segment covering 624 to 634 (GGPPSTSSPPR) has biased composition (low complexity).

This sequence belongs to the DEAD box helicase family. DDX5/DBP2 subfamily.

The enzyme catalyses ATP + H2O = ADP + phosphate + H(+). The polypeptide is DEAD-box ATP-dependent RNA helicase 46 (RH46) (Arabidopsis thaliana (Mouse-ear cress)).